The chain runs to 802 residues: Copper-exporting P-type ATPase (802 aa).

HMA domains are found at residues 5–70 (KKTT…YGVA) and 72–138 (ETVE…YDAS). 4 residues coordinate Cu(+): Cys16, Cys19, Cys83, and Cys86. 6 helical membrane passes run 161–181 (LIISAVLSLPLLMLMFVHLFN), 192–212 (WFQFILATPVQFIIGWQFYVG), 224–244 (MDVLVAVGTSAAYFYSIYEMV), 256–276 (LYFETSAVLITLILFGKYLEA), 411–431 (YFVPIVVGIALLTFIVWITLV), and 438–458 (PALVASISVLVIACPCALGLA). The active-site 4-aspartylphosphate intermediate is Asp495. The Mg(2+) site is built by Asp690 and Asp694. Transmembrane regions (helical) follow at residues 748 to 767 (LFWAFGYNIAGIPIAALGLL) and 771 to 790 (VAGAAMALSSVSVVTNALRL).

This sequence belongs to the cation transport ATPase (P-type) (TC 3.A.3) family. Type IB subfamily.

It is found in the cell membrane. It carries out the reaction Cu(+)(in) + ATP + H2O = Cu(+)(out) + ADP + phosphate + H(+). Its function is as follows. Involved in copper export. This chain is Copper-exporting P-type ATPase (copA), found in Staphylococcus aureus (strain USA300 / TCH1516).